Reading from the N-terminus, the 317-residue chain is Aspartate carbamoyltransferase catalytic subunit (317 aa).

The carbamoyl phosphate site is built by arginine 65 and threonine 66. Lysine 93 contributes to the L-aspartate binding site. Arginine 115, histidine 145, and glutamine 148 together coordinate carbamoyl phosphate. The L-aspartate site is built by arginine 178 and arginine 233. The carbamoyl phosphate site is built by glycine 274 and proline 275.

The protein belongs to the aspartate/ornithine carbamoyltransferase superfamily. ATCase family. In terms of assembly, heterododecamer (2C3:3R2) of six catalytic PyrB chains organized as two trimers (C3), and six regulatory PyrI chains organized as three dimers (R2).

The enzyme catalyses carbamoyl phosphate + L-aspartate = N-carbamoyl-L-aspartate + phosphate + H(+). It participates in pyrimidine metabolism; UMP biosynthesis via de novo pathway; (S)-dihydroorotate from bicarbonate: step 2/3. Catalyzes the condensation of carbamoyl phosphate and aspartate to form carbamoyl aspartate and inorganic phosphate, the committed step in the de novo pyrimidine nucleotide biosynthesis pathway. The protein is Aspartate carbamoyltransferase catalytic subunit of Bordetella bronchiseptica (strain ATCC BAA-588 / NCTC 13252 / RB50) (Alcaligenes bronchisepticus).